The chain runs to 618 residues: DNA mismatch repair protein MutL (618 aa).

The span at glutamate 367–arginine 378 shows a compositional bias: low complexity. Residues glutamate 367–glycine 402 form a disordered region. Positions glycine 382–threonine 392 are enriched in gly residues.

It belongs to the DNA mismatch repair MutL/HexB family.

This protein is involved in the repair of mismatches in DNA. It is required for dam-dependent methyl-directed DNA mismatch repair. May act as a 'molecular matchmaker', a protein that promotes the formation of a stable complex between two or more DNA-binding proteins in an ATP-dependent manner without itself being part of a final effector complex. This chain is DNA mismatch repair protein MutL, found in Salmonella choleraesuis (strain SC-B67).